A 271-amino-acid chain; its full sequence is Adenosylcobinamide-GDP ribazoletransferase (271 aa).

The next 7 helical transmembrane spans lie at 4–24, 35–55, 58–78, 108–128, 135–155, 192–212, and 246–266; these read FLLA…GMSM, YLQT…AYLT, FLPS…ITGL, SLGI…YASI, VLFF…IAEI, FVLG…IGYI, and IIVL…YGGL.

It belongs to the CobS family. Mg(2+) serves as cofactor.

Its subcellular location is the cell membrane. It catalyses the reaction alpha-ribazole + adenosylcob(III)inamide-GDP = adenosylcob(III)alamin + GMP + H(+). The enzyme catalyses alpha-ribazole 5'-phosphate + adenosylcob(III)inamide-GDP = adenosylcob(III)alamin 5'-phosphate + GMP + H(+). The protein operates within cofactor biosynthesis; adenosylcobalamin biosynthesis; adenosylcobalamin from cob(II)yrinate a,c-diamide: step 7/7. Joins adenosylcobinamide-GDP and alpha-ribazole to generate adenosylcobalamin (Ado-cobalamin). Also synthesizes adenosylcobalamin 5'-phosphate from adenosylcobinamide-GDP and alpha-ribazole 5'-phosphate. The polypeptide is Adenosylcobinamide-GDP ribazoletransferase (Methanococcoides burtonii (strain DSM 6242 / NBRC 107633 / OCM 468 / ACE-M)).